Reading from the N-terminus, the 438-residue chain is Enolase (438 aa).

Residues His-159 and Glu-168 each coordinate substrate. Glu-211 serves as the catalytic Proton donor. Asp-246, Glu-297, and Asp-322 together coordinate Mg(2+). Residues Glu-297 and Asp-322 each coordinate substrate. The active-site Proton acceptor is the Lys-347. Substrate contacts are provided by residues 374 to 377 (SHRS) and Lys-398.

Belongs to the enolase family. As to quaternary structure, homodimer. Mg(2+) serves as cofactor.

It is found in the cytoplasm. It carries out the reaction (2R)-2-phosphoglycerate = phosphoenolpyruvate + H2O. It functions in the pathway carbohydrate degradation; glycolysis; pyruvate from D-glyceraldehyde 3-phosphate: step 4/5. The chain is Enolase (enoA) from Aspergillus fumigatus (strain ATCC MYA-4609 / CBS 101355 / FGSC A1100 / Af293) (Neosartorya fumigata).